The primary structure comprises 718 residues: Methionine--tRNA ligase (718 aa).

Positions 27-37 (PYANGQIHIGH) match the 'HIGH' region motif. Zn(2+) is bound by residues Cys-158, Cys-161, Cys-171, and Cys-174. Residues 348-352 (KMSKS) carry the 'KMSKS' region motif. Lys-351 is an ATP binding site. The region spanning 612-718 (DFAKIDLRIA…SGAKPGMRVK (107 aa)) is the tRNA-binding domain.

It belongs to the class-I aminoacyl-tRNA synthetase family. MetG type 1 subfamily. In terms of assembly, homodimer. Zn(2+) is required as a cofactor.

The protein resides in the cytoplasm. It carries out the reaction tRNA(Met) + L-methionine + ATP = L-methionyl-tRNA(Met) + AMP + diphosphate. Functionally, is required not only for elongation of protein synthesis but also for the initiation of all mRNA translation through initiator tRNA(fMet) aminoacylation. The polypeptide is Methionine--tRNA ligase (Burkholderia thailandensis (strain ATCC 700388 / DSM 13276 / CCUG 48851 / CIP 106301 / E264)).